The following is a 374-amino-acid chain: MKSGRFIGVMSGTSLDGVDVVLAAIDETMVAQQASLTWPIPGHLKKGILDICQGQLLTLSQLGQLDTQLGRLFAQAVNALLAQQHLQPRDIVAIGCHGQTVWHEPTGDAPHTLQIGDNNHIVAHTGITVVGDFRRRDIALGGQGAPLVPAFHHALLGHPTEKRMVLNIGGIANLSLLFPRQAVRGYDTGPGNMLMDAWIWRQCAQPYDKDAAWAKEGKVILPLLQKMLSDPYFAASAPKSTGREYFNYGWLERHLAAFPGASACDVQATLAELTAVSISHQVLLNGGCERLMVCGGGSRNPLVMARLAALLPGIEVATTDKAGISGDDMEALAFAWLAWRTLAGLPGNLPSVTGASKASILGAIYPATPELRVN.

An ATP-binding site is contributed by 12–19 (GTSLDGVD).

The protein belongs to the anhydro-N-acetylmuramic acid kinase family.

It carries out the reaction 1,6-anhydro-N-acetyl-beta-muramate + ATP + H2O = N-acetyl-D-muramate 6-phosphate + ADP + H(+). It participates in amino-sugar metabolism; 1,6-anhydro-N-acetylmuramate degradation. It functions in the pathway cell wall biogenesis; peptidoglycan recycling. Functionally, catalyzes the specific phosphorylation of 1,6-anhydro-N-acetylmuramic acid (anhMurNAc) with the simultaneous cleavage of the 1,6-anhydro ring, generating MurNAc-6-P. Is required for the utilization of anhMurNAc either imported from the medium or derived from its own cell wall murein, and thus plays a role in cell wall recycling. This is Anhydro-N-acetylmuramic acid kinase from Salmonella arizonae (strain ATCC BAA-731 / CDC346-86 / RSK2980).